A 283-amino-acid polypeptide reads, in one-letter code: ATP phosphoribosyltransferase (283 aa).

This sequence belongs to the ATP phosphoribosyltransferase family. Long subfamily. It depends on Mg(2+) as a cofactor.

The protein localises to the cytoplasm. The catalysed reaction is 1-(5-phospho-beta-D-ribosyl)-ATP + diphosphate = 5-phospho-alpha-D-ribose 1-diphosphate + ATP. It participates in amino-acid biosynthesis; L-histidine biosynthesis; L-histidine from 5-phospho-alpha-D-ribose 1-diphosphate: step 1/9. Feedback inhibited by histidine. Functionally, catalyzes the condensation of ATP and 5-phosphoribose 1-diphosphate to form N'-(5'-phosphoribosyl)-ATP (PR-ATP). Has a crucial role in the pathway because the rate of histidine biosynthesis seems to be controlled primarily by regulation of HisG enzymatic activity. This Nocardia farcinica (strain IFM 10152) protein is ATP phosphoribosyltransferase.